Consider the following 282-residue polypeptide: Acetyl-coenzyme A carboxylase carboxyl transferase subunit beta (282 aa).

A CoA carboxyltransferase N-terminal domain is found at 29–282; that stretch reads LMQRCPNCGL…LLKYGGMQDD (254 aa). The Zn(2+) site is built by Cys33, Cys36, Cys51, and Cys54. The segment at 33–54 adopts a C4-type zinc-finger fold; the sequence is CPNCGLEFFARRLDKYKTCPDC.

The protein belongs to the AccD/PCCB family. In terms of assembly, acetyl-CoA carboxylase is a heterohexamer composed of biotin carboxyl carrier protein (AccB), biotin carboxylase (AccC) and two subunits each of ACCase subunit alpha (AccA) and ACCase subunit beta (AccD). Requires Zn(2+) as cofactor.

It localises to the cytoplasm. It catalyses the reaction N(6)-carboxybiotinyl-L-lysyl-[protein] + acetyl-CoA = N(6)-biotinyl-L-lysyl-[protein] + malonyl-CoA. It functions in the pathway lipid metabolism; malonyl-CoA biosynthesis; malonyl-CoA from acetyl-CoA: step 1/1. Its function is as follows. Component of the acetyl coenzyme A carboxylase (ACC) complex. Biotin carboxylase (BC) catalyzes the carboxylation of biotin on its carrier protein (BCCP) and then the CO(2) group is transferred by the transcarboxylase to acetyl-CoA to form malonyl-CoA. This chain is Acetyl-coenzyme A carboxylase carboxyl transferase subunit beta, found in Lactobacillus delbrueckii subsp. bulgaricus (strain ATCC BAA-365 / Lb-18).